Reading from the N-terminus, the 188-residue chain is dCTP deaminase (188 aa).

DCTP-binding positions include 111 to 116 (KSTYAR), 135 to 137 (TLE), glutamine 156, tyrosine 170, and glutamine 180. Glutamate 137 functions as the Proton donor/acceptor in the catalytic mechanism.

It belongs to the dCTP deaminase family. In terms of assembly, homotrimer.

The enzyme catalyses dCTP + H2O + H(+) = dUTP + NH4(+). The protein operates within pyrimidine metabolism; dUMP biosynthesis; dUMP from dCTP (dUTP route): step 1/2. Catalyzes the deamination of dCTP to dUTP. The chain is dCTP deaminase from Methylococcus capsulatus (strain ATCC 33009 / NCIMB 11132 / Bath).